The sequence spans 151 residues: Transcriptional regulator MraZ (151 aa).

SpoVT-AbrB domains are found at residues 5–52 (ANAI…PLDE) and 81–124 (AVDL…DEDA).

Belongs to the MraZ family. As to quaternary structure, forms oligomers.

Its subcellular location is the cytoplasm. It localises to the nucleoid. The polypeptide is Transcriptional regulator MraZ (Pseudomonas fluorescens (strain Pf0-1)).